Here is a 765-residue protein sequence, read N- to C-terminus: Lysyl oxidase homolog 2 (765 aa).

The N-terminal stretch at 1–19 (MLVSHVFLLTLSLSVPSLG) is a signal peptide. 4 SRCR domains span residues 49-150 (VRLA…VQCS), 179-293 (IRPI…VSCT), 317-416 (VRLR…VRCN), and 426-535 (VRLS…VSCV). 9 disulfides stabilise this stretch: Cys-75–Cys-139, Cys-88–Cys-149, Cys-119–Cys-129, Cys-209–Cys-282, Cys-222–Cys-292, Cys-256–Cys-266, Cys-342–Cys-405, Cys-355–Cys-415, and Cys-386–Cys-396. Asn-279 carries an N-linked (GlcNAc...) asparagine glycan. A glycan (N-linked (GlcNAc...) asparagine) is linked at Asn-446. Disulfide bonds link Cys-455/Cys-521, Cys-468/Cys-534, and Cys-502/Cys-512. The segment at 539–742 (PDLVLNAALV…WMYNCHIGGS (204 aa)) is lysyl-oxidase like. The Ca(2+) site is built by Asp-540 and Leu-541. 4 disulfide bridges follow: Cys-564-Cys-616, Cys-570-Cys-686, Cys-648-Cys-664, and Cys-654-Cys-676. Residues His-617, His-619, and His-621 each coordinate Cu cation. N-linked (GlcNAc...) asparagine glycosylation occurs at Asn-635. The segment at residues 644–680 (KASFCLEDSECEADIQKQYVCANFGEQGITVGCWDLY) is a cross-link (lysine tyrosylquinone (Lys-Tyr)). The residue at position 680 (Tyr-680) is a 2',4',5'-topaquinone. Positions 713, 715, 718, and 719 each coordinate Ca(2+). A disulfide bridge connects residues Cys-723 and Cys-737.

Belongs to the lysyl oxidase family. It depends on Cu cation as a cofactor. Requires lysine tyrosylquinone residue as cofactor. In terms of processing, the lysine tyrosylquinone cross-link (LTQ) is generated by condensation of the epsilon-amino group of a lysine with a topaquinone produced by oxidation of tyrosine.

The protein localises to the secreted. It localises to the extracellular space. It is found in the extracellular matrix. The protein resides in the basement membrane. Its subcellular location is the nucleus. The protein localises to the chromosome. It localises to the endoplasmic reticulum. The enzyme catalyses L-lysyl-[protein] + O2 + H2O = (S)-2-amino-6-oxohexanoyl-[protein] + H2O2 + NH4(+). Its function is as follows. Mediates the post-translational oxidative deamination of lysine residues on target proteins leading to the formation of deaminated lysine (allysine). Acts as a transcription corepressor and specifically mediates deamination of trimethylated 'Lys-4' of histone H3 (H3K4me3), a specific tag for epigenetic transcriptional activation. Shows no activity against histone H3 when it is trimethylated on 'Lys-9' (H3K9me3) or 'Lys-27' (H3K27me3) or when 'Lys-4' is monomethylated (H3K4me1) or dimethylated (H3K4me2). Also mediates deamination of methylated TAF10, a member of the transcription factor IID (TFIID) complex, which induces release of TAF10 from promoters, leading to inhibition of TFIID-dependent transcription. LOXL2-mediated deamination of TAF10 results in transcriptional repression of genes required for embryonic stem cell pluripotency. Involved in epithelial to mesenchymal transition (EMT) and participates in repression of E-cadherin, probably by mediating deamination of histone H3. When secreted into the extracellular matrix, promotes cross-linking of extracellular matrix proteins by mediating oxidative deamination of peptidyl lysine residues in precursors to fibrous collagen and elastin. Acts as a regulator of sprouting angiogenesis, probably via collagen IV scaffolding. Acts as a regulator of chondrocyte differentiation, probably by regulating expression of factors that control chondrocyte differentiation. In Xenopus laevis (African clawed frog), this protein is Lysyl oxidase homolog 2 (loxl2).